A 228-amino-acid chain; its full sequence is Response regulator SaeR (228 aa).

A Response regulatory domain is found at His-3–Leu-116. At Asp-51 the chain carries 4-aspartylphosphate. The ompR/PhoB-type DNA-binding region spans Val-127–Arg-226.

Post-translationally, phosphorylated by SaeS.

It is found in the cytoplasm. In terms of biological role, member of the two-component regulatory system SaeR/SaeS involved in the regulation of staphylococcal virulence factors in a strain-dependent fashion. Probably functions as a transcriptional regulator via a specific DNA-binding domain, recognizing motifs near the promoter sequences of target genes. This is Response regulator SaeR (saeR) from Staphylococcus aureus (strain USA300).